Consider the following 587-residue polypeptide: Prolycopene isomerase 2, chloroplastic (587 aa).

A chloroplast-targeting transit peptide spans 1-50; that stretch reads MLCLSLNSSSTSPPKLPLHHSFSRRGIRSWVRSPCVQRKKLGFWSSPKAV.

This sequence belongs to the carotenoid/retinoid oxidoreductase family. CrtISO subfamily. The cofactor is NAD(+). NADP(+) is required as a cofactor. FAD serves as cofactor. In terms of tissue distribution, up-regulated in the flower buds and flower lip tissue, while it is weakly expressed in leaves.

It localises to the plastid. The protein resides in the chloroplast membrane. The catalysed reaction is 7,7',9,9'-tetra-cis-lycopene = all-trans-lycopene. It participates in carotenoid biosynthesis; lycopene biosynthesis. Carotene cis-trans-isomerase that converts 7,9,9'-tri-cis-neurosporene to 9'-cis-neurosporene and 7,9,9',7'-tetra-cis-lycopene (also known as prolycopene) into all-trans-lycopene. Isomerization requires redox-active components, suggesting that isomerization is achieved by a reversible redox reaction acting at specific double bonds. Isomerizes adjacent cis-double bonds at C7 and C9 pairwise into the trans-configuration, but is incapable of isomerizing single cis-double bonds at C9 and C9'. This Oncidium hybrid cultivar (Orchid) protein is Prolycopene isomerase 2, chloroplastic (CRTISO2).